Consider the following 1940-residue polypeptide: Myosin-2 (1940 aa).

In terms of domain architecture, Myosin N-terminal SH3-like spans 33–82 (DAKTSVFVAEPKESFVKGTIQSREGGKVTVKTEGGATLTVKEDQVFPMNP). A phosphothreonine mark is found at threonine 64 and threonine 69. One can recognise a Myosin motor domain in the interval 86–783 (DKIEDMAMMT…LLGLLEEMRD (698 aa)). Position 130 is an N6,N6,N6-trimethyllysine (lysine 130). 179–186 (GESGAGKT) contacts ATP. At tyrosine 389 the chain carries Phosphotyrosine. Position 392 is a phosphoserine (serine 392). Threonine 419 carries the post-translational modification Phosphothreonine. Serine 625 is subject to Phosphoserine. Residues 660–682 (LNKLMTNLRSTHPHFVRCIIPNE) form an actin-binding region. Histidine 758 carries the post-translational modification Pros-methylhistidine. Residues 762 to 776 (KFGHTKVFFKAGLLG) form an actin-binding region. The IQ domain maps to 786–815 (LAQLMTRTQARCRGFLARVEYQKMVERRES). Positions 844–1940 (LLKSAETEKE…EVHTKIISEE (1097 aa)) form a coiled coil. Phosphoserine is present on residues serine 1093, serine 1097, serine 1163, and serine 1238. Position 1242 is a phosphothreonine (threonine 1242). Serine 1244 is subject to Phosphoserine. Threonine 1256 and threonine 1287 each carry phosphothreonine. Residues serine 1289, serine 1293, serine 1304, and serine 1307 each carry the phosphoserine modification. Tyrosine 1465 is modified (phosphotyrosine). Threonine 1468 is subject to Phosphothreonine. A Phosphotyrosine modification is found at tyrosine 1493. At serine 1496 the chain carries Phosphoserine. Threonine 1502 bears the Phosphothreonine mark. At serine 1515 the chain carries Phosphoserine. Threonine 1518 bears the Phosphothreonine mark. Serine 1543, serine 1555, serine 1575, serine 1601, serine 1715, and serine 1727 each carry phosphoserine. A phosphothreonine mark is found at threonine 1731 and threonine 1737. Residues 1886-1905 (QAEEAEEQSNTNLSKFRKLQ) are disordered.

It belongs to the TRAFAC class myosin-kinesin ATPase superfamily. Myosin family. Muscle myosin is a hexameric protein that consists of 2 heavy chain subunits (MHC), 2 alkali light chain subunits (MLC) and 2 regulatory light chain subunits (MLC-2). Interacts with GCSAM.

The protein resides in the cytoplasm. It is found in the myofibril. Functionally, myosins are actin-based motor molecules with ATPase activity essential for muscle contraction. This chain is Myosin-2 (MYH2), found in Bos taurus (Bovine).